The sequence spans 107 residues: Early E3A 12.5 kDa protein (107 aa).

It belongs to the adenoviridae E3A-2 family.

Its function is as follows. Not yet known. This is Early E3A 12.5 kDa protein from Human adenovirus C serotype 5 (HAdV-5).